A 611-amino-acid polypeptide reads, in one-letter code: tRNA uridine 5-carboxymethylaminomethyl modification enzyme MnmG (611 aa).

Residue 12–17 participates in FAD binding; it reads GGGHSG. 271–285 provides a ligand contact to NAD(+); sequence GPRYCPSIEEKVYRF.

The protein belongs to the MnmG family. As to quaternary structure, homodimer. Heterotetramer of two MnmE and two MnmG subunits. FAD is required as a cofactor.

It is found in the cytoplasm. In terms of biological role, NAD-binding protein involved in the addition of a carboxymethylaminomethyl (cmnm) group at the wobble position (U34) of certain tRNAs, forming tRNA-cmnm(5)s(2)U34. This is tRNA uridine 5-carboxymethylaminomethyl modification enzyme MnmG from Karelsulcia muelleri (strain GWSS) (Sulcia muelleri).